The chain runs to 387 residues: 2-alkyl-3-oxoalkanoate reductase (387 aa).

Tyr190 (proton acceptor) is an active-site residue. Lys194 is a binding site for NADP(+).

It belongs to the 3-beta-HSD family.

It carries out the reaction a (2R,3S)-2-alkyl-3-hydroxyalkanoate + NADP(+) = an (R)-2-alkyl-3-oxoalkanoate + NADPH + H(+). Its function is as follows. Involved in olefin biosynthesis. Catalyzes the reversible stereospecific NADPH-dependent reduction of 2-alkyl-3-oxoalkanoic acids to 2-alkyl-3-hydroxyalkanoic acids. The S.oneidensis oleABCD genes produce 3,6,9,12,15,19,22,25,28-hentriacontanonaene, which may aid the cells in adapting to a sudden drop in temperature. The chain is 2-alkyl-3-oxoalkanoate reductase from Shewanella oneidensis (strain ATCC 700550 / JCM 31522 / CIP 106686 / LMG 19005 / NCIMB 14063 / MR-1).